Consider the following 291-residue polypeptide: ATP phosphoribosyltransferase (291 aa).

Belongs to the ATP phosphoribosyltransferase family. Long subfamily. Requires Mg(2+) as cofactor.

It is found in the cytoplasm. It catalyses the reaction 1-(5-phospho-beta-D-ribosyl)-ATP + diphosphate = 5-phospho-alpha-D-ribose 1-diphosphate + ATP. The protein operates within amino-acid biosynthesis; L-histidine biosynthesis; L-histidine from 5-phospho-alpha-D-ribose 1-diphosphate: step 1/9. Feedback inhibited by histidine. Catalyzes the condensation of ATP and 5-phosphoribose 1-diphosphate to form N'-(5'-phosphoribosyl)-ATP (PR-ATP). Has a crucial role in the pathway because the rate of histidine biosynthesis seems to be controlled primarily by regulation of HisG enzymatic activity. The sequence is that of ATP phosphoribosyltransferase from Geotalea uraniireducens (strain Rf4) (Geobacter uraniireducens).